The sequence spans 467 residues: ATP synthase subunit beta (467 aa).

156-163 (GGAGVGKT) serves as a coordination point for ATP.

The protein belongs to the ATPase alpha/beta chains family. F-type ATPases have 2 components, CF(1) - the catalytic core - and CF(0) - the membrane proton channel. CF(1) has five subunits: alpha(3), beta(3), gamma(1), delta(1), epsilon(1). CF(0) has three main subunits: a(1), b(2) and c(9-12). The alpha and beta chains form an alternating ring which encloses part of the gamma chain. CF(1) is attached to CF(0) by a central stalk formed by the gamma and epsilon chains, while a peripheral stalk is formed by the delta and b chains.

The protein resides in the cell membrane. It carries out the reaction ATP + H2O + 4 H(+)(in) = ADP + phosphate + 5 H(+)(out). Produces ATP from ADP in the presence of a proton gradient across the membrane. The catalytic sites are hosted primarily by the beta subunits. The sequence is that of ATP synthase subunit beta from Cytobacillus firmus (Bacillus firmus).